Consider the following 342-residue polypeptide: Paired box protein Pax-9 (342 aa).

The paired DNA-binding region spans Ala4–Lys130. A PAI subdomain region spans residues Glu7–Thr63. Residues Thr82–Lys130 form an RED subdomain region. The segment at Ala168–Pro189 is interaction with KDM5B.

As to quaternary structure, interacts with KDM5B.

It localises to the nucleus. Transcription factor required for normal development of thymus, parathyroid glands, ultimobranchial bodies, teeth, skeletal elements of skull and larynx as well as distal limbs. This is Paired box protein Pax-9 from Rattus norvegicus (Rat).